Here is a 298-residue protein sequence, read N- to C-terminus: GTP cyclohydrolase FolE2 (298 aa).

Belongs to the GTP cyclohydrolase IV family.

The enzyme catalyses GTP + H2O = 7,8-dihydroneopterin 3'-triphosphate + formate + H(+). Its pathway is cofactor biosynthesis; 7,8-dihydroneopterin triphosphate biosynthesis; 7,8-dihydroneopterin triphosphate from GTP: step 1/1. Its function is as follows. Converts GTP to 7,8-dihydroneopterin triphosphate. The sequence is that of GTP cyclohydrolase FolE2 from Neisseria meningitidis serogroup C (strain 053442).